The following is a 344-amino-acid chain: 4-dimethylallyltryptophan N-methyltransferase easF (344 aa).

This sequence belongs to the methyltransferase superfamily. Homodimer.

The enzyme catalyses 4-(3-methylbut-2-enyl)-L-tryptophan + S-adenosyl-L-methionine = 4-(3-methylbut-2-enyl)-L-abrine + S-adenosyl-L-homocysteine + H(+). Its pathway is alkaloid biosynthesis; ergot alkaloid biosynthesis. Its function is as follows. 4-dimethylallyltryptophan N-methyltransferase; part of the gene cluster that mediates the biosynthesis of fungal ergot alkaloid. DmaW catalyzes the first step of ergot alkaloid biosynthesis by condensing dimethylallyl diphosphate (DMAP) and tryptophan to form 4-dimethylallyl-L-tryptophan. The second step is catalyzed by the methyltransferase easF that methylates 4-dimethylallyl-L-tryptophan in the presence of S-adenosyl-L-methionine, resulting in the formation of 4-dimethylallyl-L-abrine. The catalase easC and the FAD-dependent oxidoreductase easE then transform 4-dimethylallyl-L-abrine to chanoclavine-I which is further oxidized by easD in the presence of NAD(+), resulting in the formation of chanoclavine-I aldehyde. Agroclavine dehydrogenase easG then mediates the conversion of chanoclavine-I aldehyde to agroclavine via a non-enzymatic adduct reaction: the substrate is an iminium intermediate that is formed spontaneously from chanoclavine-I aldehyde in the presence of glutathione. The presence of easA is not required to complete this reaction. Further conversion of agroclavine to paspalic acid is a two-step process involving oxidation of agroclavine to elymoclavine and of elymoclavine to paspalic acid, the second step being performed by the elymoclavine oxidase cloA. Paspalic acid is then further converted to D-lysergic acid. Ergopeptines are assembled from D-lysergic acid and three different amino acids by the D-lysergyl-peptide-synthetases composed each of a monomudular and a trimodular nonribosomal peptide synthetase subunit. LpsB and lpsC encode the monomodular subunits responsible for D-lysergic acid activation and incorporation into the ergopeptine backbone. LpsA1 and A2 subunits encode the trimodular nonribosomal peptide synthetase assembling the tripeptide portion of ergopeptines. LpsA1 is responsible for formation of the major ergopeptine, ergotamine, and lpsA2 for alpha-ergocryptine, the minor ergopeptine of the total alkaloid mixture elaborated by C.purpurea. D-lysergyl-tripeptides are assembled by the nonribosomal peptide synthetases and released as N-(D-lysergyl-aminoacyl)-lactams. Cyclolization of the D-lysergyl-tripeptides is performed by the Fe(2+)/2-ketoglutarate-dependent dioxygenase easH which introduces a hydroxyl group into N-(D-lysergyl-aminoacyl)-lactam at alpha-C of the aminoacyl residue followed by spontaneous condensation with the terminal lactam carbonyl group. This chain is 4-dimethylallyltryptophan N-methyltransferase easF, found in Claviceps purpurea (Ergot fungus).